An 868-amino-acid chain; its full sequence is mRNA-capping enzyme (868 aa).

Residue Lys282 is the N6-GMP-lysine intermediate of the active site. The mRNA cap 0 methyltransferase domain maps to 594 to 868 (GIYRAQTALI…LFGFICLRKN (275 aa)). S-adenosyl-L-methionine is bound by residues Lys607, Gly624, Asp646, and 710 to 712 (LFI).

The protein in the N-terminal section; belongs to the dsDNA virus mRNA guanylyltransferase family. In the C-terminal section; belongs to the class I-like SAM-binding methyltransferase superfamily. mRNA cap 0 methyltransferase family. Part of the viral DNA-directed RNA polymerase that consists of 8 polII-like subunits (RPB1, RPB2, RPB3, RPB5, RPB6, RPB7, RPB9, RPB10), a capping enzyme and a termination factor.

It localises to the virion. It carries out the reaction a 5'-end triphospho-ribonucleoside in mRNA + H2O = a 5'-end diphospho-ribonucleoside in mRNA + phosphate + H(+). It catalyses the reaction a 5'-end diphospho-ribonucleoside in mRNA + GTP + H(+) = a 5'-end (5'-triphosphoguanosine)-ribonucleoside in mRNA + diphosphate. The catalysed reaction is a 5'-end (5'-triphosphoguanosine)-ribonucleoside in mRNA + S-adenosyl-L-methionine = a 5'-end (N(7)-methyl 5'-triphosphoguanosine)-ribonucleoside in mRNA + S-adenosyl-L-homocysteine. The protein operates within mRNA processing; mRNA capping. Its function is as follows. Probably catalyzes the second reaction in the mRNA cap formation pathway. Forms a covalent complex with GTP. The chain is mRNA-capping enzyme from African swine fever virus (isolate Tick/South Africa/Pretoriuskop Pr4/1996) (ASFV).